Reading from the N-terminus, the 227-residue chain is NAD(P)H-quinone oxidoreductase subunit K, chloroplastic (227 aa).

Residues C43, C44, C108, and C139 each coordinate [4Fe-4S] cluster. Polar residues predominate over residues 173–192; sequence RSFTTNHKFQVGRSSHTGNY. Residues 173 to 201 are disordered; sequence RSFTTNHKFQVGRSSHTGNYDQGFLSKPP.

The protein belongs to the complex I 20 kDa subunit family. NDH is composed of at least 16 different subunits, 5 of which are encoded in the nucleus. It depends on [4Fe-4S] cluster as a cofactor.

The protein localises to the plastid. It localises to the chloroplast thylakoid membrane. It catalyses the reaction a plastoquinone + NADH + (n+1) H(+)(in) = a plastoquinol + NAD(+) + n H(+)(out). The enzyme catalyses a plastoquinone + NADPH + (n+1) H(+)(in) = a plastoquinol + NADP(+) + n H(+)(out). NDH shuttles electrons from NAD(P)H:plastoquinone, via FMN and iron-sulfur (Fe-S) centers, to quinones in the photosynthetic chain and possibly in a chloroplast respiratory chain. The immediate electron acceptor for the enzyme in this species is believed to be plastoquinone. Couples the redox reaction to proton translocation, and thus conserves the redox energy in a proton gradient. This chain is NAD(P)H-quinone oxidoreductase subunit K, chloroplastic, found in Trachelium caeruleum (Blue throatwort).